We begin with the raw amino-acid sequence, 134 residues long: Endoribonuclease YbeY (134 aa).

His94, His98, and His104 together coordinate Zn(2+).

Belongs to the endoribonuclease YbeY family. Zn(2+) serves as cofactor.

It is found in the cytoplasm. Its function is as follows. Single strand-specific metallo-endoribonuclease involved in late-stage 70S ribosome quality control and in maturation of the 3' terminus of the 16S rRNA. In Campylobacter fetus subsp. fetus (strain 82-40), this protein is Endoribonuclease YbeY.